The sequence spans 468 residues: Protein C-ets-2 (468 aa).

The region spanning 85-170 (ATFSGFQKEQ…EHLEQMIKEN (86 aa)) is the PNT domain. Phosphoserine is present on residues S220 and S225. The tract at residues 262-290 (VNLLNNNSGKPKDHDSPENGGDSFESSDS) is disordered. Phosphoserine is present on residues S294, S297, and S300. The ETS DNA-binding region spans 362 to 442 (IQLWQFLLEL…SGKRYVYRFV (81 aa)).

The protein belongs to the ETS family. Phosphorylation by CDK10 at Ser-220 and Ser-225 creates a phosphodegron that targets ETS2 for proteasomal degradation.

Its subcellular location is the nucleus. Its function is as follows. Transcription factor activating transcription. Binds specifically the GGA DNA motif in gene promoters and stimulates transcription of those genes. This chain is Protein C-ets-2 (Ets2), found in Mus musculus (Mouse).